A 101-amino-acid chain; its full sequence is uncharacterized protein (101 aa).

The segment covering methionine 1–glutamate 11 has biased composition (basic and acidic residues). The interval methionine 1 to arginine 26 is disordered.

This is an uncharacterized protein from Torque teno canis virus (isolate Cf-TTV10).